The following is a 304-amino-acid chain: Acetyl-coenzyme A carboxylase carboxyl transferase subunit beta (304 aa).

A CoA carboxyltransferase N-terminal domain is found at 23 to 292 (VWTKCDSCGQ…PNPDAPREGV (270 aa)). Zn(2+) contacts are provided by C27, C30, C46, and C49. The segment at 27–49 (CDSCGQVLYRAELERNLEVCPKC) adopts a C4-type zinc-finger fold. Positions 284-304 (NPDAPREGVVVPPAPDQESEV) are disordered.

The protein belongs to the AccD/PCCB family. Acetyl-CoA carboxylase is a heterohexamer composed of biotin carboxyl carrier protein (AccB), biotin carboxylase (AccC) and two subunits each of ACCase subunit alpha (AccA) and ACCase subunit beta (AccD). It depends on Zn(2+) as a cofactor.

The protein resides in the cytoplasm. It catalyses the reaction N(6)-carboxybiotinyl-L-lysyl-[protein] + acetyl-CoA = N(6)-biotinyl-L-lysyl-[protein] + malonyl-CoA. It functions in the pathway lipid metabolism; malonyl-CoA biosynthesis; malonyl-CoA from acetyl-CoA: step 1/1. Its function is as follows. Component of the acetyl coenzyme A carboxylase (ACC) complex. Biotin carboxylase (BC) catalyzes the carboxylation of biotin on its carrier protein (BCCP) and then the CO(2) group is transferred by the transcarboxylase to acetyl-CoA to form malonyl-CoA. The polypeptide is Acetyl-coenzyme A carboxylase carboxyl transferase subunit beta (Salmonella paratyphi A (strain ATCC 9150 / SARB42)).